A 437-amino-acid chain; its full sequence is mRNA cleavage and polyadenylation factor CLP1 (437 aa).

ATP is bound by residues E23 and 122–127 (STGKSS).

Belongs to the Clp1 family. Clp1 subfamily. Component of a pre-mRNA cleavage factor complex. Interacts directly with PCF11.

The protein localises to the nucleus. In terms of biological role, required for endonucleolytic cleavage during polyadenylation-dependent pre-mRNA 3'-end formation. The sequence is that of mRNA cleavage and polyadenylation factor CLP1 from Kluyveromyces lactis (strain ATCC 8585 / CBS 2359 / DSM 70799 / NBRC 1267 / NRRL Y-1140 / WM37) (Yeast).